A 2505-amino-acid chain; its full sequence is Fatty acid synthase (2505 aa).

Met1 is modified (N-acetylmethionine). The Ketosynthase family 3 (KS3) domain occupies 1-406 (MEEVVIAGMS…GANVHVILQP (406 aa)). At Lys59 the chain carries N6-acetyllysine. Ser63 is subject to Phosphoserine. Lys70 carries the post-translational modification N6-acetyllysine. The active-site For beta-ketoacyl synthase activity is the Cys161. Residue Ser207 is modified to Phosphoserine. His293 acts as the For beta-ketoacyl synthase activity in catalysis. Lys298 bears the N6-acetyllysine mark. His331 (for beta-ketoacyl synthase activity) is an active-site residue. Positions 429 to 817 (RTMEAVQGLL…IDINPNALFP (389 aa)) are acyl and malonyl transferases. At Lys528 the chain carries N6-acetyllysine. Ser581 (for malonyltransferase activity) is an active-site residue. An acyl-CoA contacts are provided by residues 647-648 (DT) and Phe671. Lys673 bears the N6-acetyllysine mark. A Phosphoserine modification is found at Ser725. Arg773 provides a ligand contact to an acyl-CoA. Lys790 carries the N6-acetyllysine modification. The interval 844-966 (IPVAEDFPNG…KVYQWEDPDS (123 aa)) is N-terminal hotdog fold. The region spanning 844-1112 (IPVAEDFPNG…TSRRQQEQLV (269 aa)) is the PKS/mFAS DH domain. The Proton acceptor; for dehydratase activity role is filled by His878. A C-terminal hotdog fold region spans residues 983-1112 (VSRLTQGEVY…TSRRQQEQLV (130 aa)). Position 993 is an N6-acetyllysine (Lys993). Residue Asp1032 is the Proton donor; for dehydratase activity of the active site. Lys1276 is modified (N6-acetyllysine). Position 1464 is an S-nitrosocysteine (Cys1464). 2 positions are modified to phosphoserine: Ser1578 and Ser1588. Residues 1629-1857 (DVPSSWTLEE…VQVREEEPEA (229 aa)) form an enoyl reductase region. 1665-1682 (VLIHSGSGGVGQAAISIA) is a binding site for NADP(+). N6-(pyridoxal phosphate)lysine; alternate is present on Lys1698. N6-acetyllysine; alternate is present on Lys1698. An N6-acetyllysine mark is found at Lys1765, Lys1841, and Lys1989. Residue 1765 to 1780 (KFDLSNNHPLGMAIFL) participates in NADP(+) binding. Residues 1858-2113 (MLPGAQPTLI…VLAEKKAVAH (256 aa)) are beta-ketoacyl reductase. S-nitrosocysteine is present on Cys2085. Residues 2113 to 2193 (HGDGEAQRDL…EMSSKAGSDT (81 aa)) form the Carrier domain. O-(pantetheine 4'-phosphoryl)serine; alternate is present on Ser2151. Ser2151 is modified (phosphoserine; alternate). 2 positions are modified to phosphoserine: Ser2191 and Ser2230. A thioesterase region spans residues 2202–2505 (NDTSLKQAQL…AEPRVSVREG (304 aa)). The active-site For thioesterase activity is the Ser2302. Residue Lys2385 is modified to N6-acetyllysine. Lys2443 participates in a covalent cross-link: Glycyl lysine isopeptide (Lys-Gly) (interchain with G-Cter in SUMO2). His2475 acts as the For thioesterase activity in catalysis.

As to quaternary structure, homodimer which is arranged in a head to tail fashion. Interacts with CEACAM1; this interaction is insulin and phosphorylation-dependent; reduces fatty-acid synthase activity. Post-translationally, S-nitrosylation of Fatty acid synthase at cysteine residues Cys-1464 or Cys-2085 is important for the enzyme dimerization. In adipocytes, S-nitrosylation of Fatty acid synthase occurs under physiological conditions and gradually increases during adipogenesis.

It is found in the cytoplasm. It localises to the melanosome. It carries out the reaction acetyl-CoA + n malonyl-CoA + 2n NADPH + 2n H(+) = a long-chain fatty acid + (n+1) CoA + n CO2 + 2n NADP(+).. It catalyses the reaction holo-[ACP] + acetyl-CoA = acetyl-[ACP] + CoA. The catalysed reaction is holo-[ACP] + malonyl-CoA = malonyl-[ACP] + CoA. The enzyme catalyses a fatty acyl-[ACP] + malonyl-[ACP] + H(+) = a 3-oxoacyl-[ACP] + holo-[ACP] + CO2. It carries out the reaction a (3R)-hydroxyacyl-[ACP] + NADP(+) = a 3-oxoacyl-[ACP] + NADPH + H(+). It catalyses the reaction a (3R)-hydroxyacyl-[ACP] = a (2E)-enoyl-[ACP] + H2O. The catalysed reaction is a 2,3-saturated acyl-[ACP] + NADP(+) = a (2E)-enoyl-[ACP] + NADPH + H(+). The enzyme catalyses hexadecanoyl-[ACP] + H2O = hexadecanoate + holo-[ACP] + H(+). It carries out the reaction acetyl-[ACP] + malonyl-[ACP] + H(+) = 3-oxobutanoyl-[ACP] + holo-[ACP] + CO2. It catalyses the reaction 3-oxobutanoyl-[ACP] + NADPH + H(+) = (3R)-hydroxybutanoyl-[ACP] + NADP(+). The catalysed reaction is (3R)-hydroxybutanoyl-[ACP] = (2E)-butenoyl-[ACP] + H2O. The enzyme catalyses (2E)-butenoyl-[ACP] + NADPH + H(+) = butanoyl-[ACP] + NADP(+). It carries out the reaction butanoyl-[ACP] + malonyl-[ACP] + H(+) = 3-oxohexanoyl-[ACP] + holo-[ACP] + CO2. It catalyses the reaction 3-oxohexanoyl-[ACP] + NADPH + H(+) = (3R)-hydroxyhexanoyl-[ACP] + NADP(+). The catalysed reaction is (3R)-hydroxyhexanoyl-[ACP] = (2E)-hexenoyl-[ACP] + H2O. The enzyme catalyses (2E)-hexenoyl-[ACP] + NADPH + H(+) = hexanoyl-[ACP] + NADP(+). It carries out the reaction hexanoyl-[ACP] + malonyl-[ACP] + H(+) = 3-oxooctanoyl-[ACP] + holo-[ACP] + CO2. It catalyses the reaction 3-oxooctanoyl-[ACP] + NADPH + H(+) = (3R)-hydroxyoctanoyl-[ACP] + NADP(+). The catalysed reaction is (3R)-hydroxyoctanoyl-[ACP] = (2E)-octenoyl-[ACP] + H2O. The enzyme catalyses (2E)-octenoyl-[ACP] + NADPH + H(+) = octanoyl-[ACP] + NADP(+). It carries out the reaction octanoyl-[ACP] + malonyl-[ACP] + H(+) = 3-oxodecanoyl-[ACP] + holo-[ACP] + CO2. It catalyses the reaction 3-oxodecanoyl-[ACP] + NADPH + H(+) = (3R)-hydroxydecanoyl-[ACP] + NADP(+). The catalysed reaction is (3R)-hydroxydecanoyl-[ACP] = (2E)-decenoyl-[ACP] + H2O. The enzyme catalyses (2E)-decenoyl-[ACP] + NADPH + H(+) = decanoyl-[ACP] + NADP(+). It carries out the reaction decanoyl-[ACP] + malonyl-[ACP] + H(+) = 3-oxododecanoyl-[ACP] + holo-[ACP] + CO2. It catalyses the reaction 3-oxododecanoyl-[ACP] + NADPH + H(+) = (3R)-hydroxydodecanoyl-[ACP] + NADP(+). The catalysed reaction is (3R)-hydroxydodecanoyl-[ACP] = (2E)-dodecenoyl-[ACP] + H2O. The enzyme catalyses (2E)-dodecenoyl-[ACP] + NADPH + H(+) = dodecanoyl-[ACP] + NADP(+). It carries out the reaction dodecanoyl-[ACP] + malonyl-[ACP] + H(+) = 3-oxotetradecanoyl-[ACP] + holo-[ACP] + CO2. It catalyses the reaction 3-oxotetradecanoyl-[ACP] + NADPH + H(+) = (3R)-hydroxytetradecanoyl-[ACP] + NADP(+). The catalysed reaction is (3R)-hydroxytetradecanoyl-[ACP] = (2E)-tetradecenoyl-[ACP] + H2O. The enzyme catalyses (2E)-tetradecenoyl-[ACP] + NADPH + H(+) = tetradecanoyl-[ACP] + NADP(+). It carries out the reaction tetradecanoyl-[ACP] + malonyl-[ACP] + H(+) = 3-oxohexadecanoyl-[ACP] + holo-[ACP] + CO2. It catalyses the reaction 3-oxohexadecanoyl-[ACP] + NADPH + H(+) = (3R)-hydroxyhexadecanoyl-[ACP] + NADP(+). The catalysed reaction is (3R)-hydroxyhexadecanoyl-[ACP] = (2E)-hexadecenoyl-[ACP] + H2O. The enzyme catalyses (2E)-hexadecenoyl-[ACP] + NADPH + H(+) = hexadecanoyl-[ACP] + NADP(+). It carries out the reaction hexadecanoyl-[ACP] + malonyl-[ACP] + H(+) = 3-oxooctadecanoyl-[ACP] + holo-[ACP] + CO2. It catalyses the reaction 3-oxooctadecanoyl-[ACP] + NADPH + H(+) = (3R)-hydroxyoctadecanoyl-[ACP] + NADP(+). The catalysed reaction is (3R)-hydroxyoctadecanoyl-[ACP] = (2E)-octadecenoyl-[ACP] + H2O. The enzyme catalyses (2E)-octadecenoyl-[ACP] + NADPH + H(+) = octadecanoyl-[ACP] + NADP(+). It carries out the reaction tetradecanoyl-[ACP] + H2O = tetradecanoate + holo-[ACP] + H(+). It catalyses the reaction octadecanoyl-[ACP] + H2O = octadecanoate + holo-[ACP] + H(+). Its pathway is lipid metabolism; fatty acid biosynthesis. Its activity is regulated as follows. Cerulenin, a potent non-competitive pharmacological inhibitor of FAS, binds covalently to the active site of the condensing enzyme region, inactivating a key enzyme step in fatty acid synthesis. Another inhibitor, though less efficient, is C75, a member of the alpha-methylene-gamma-butyrolactone chemical class, also proposed as an antitumour and anti-obesity agent. In terms of biological role, fatty acid synthetase is a multifunctional enzyme that catalyzes the de novo biosynthesis of long-chain saturated fatty acids starting from acetyl-CoA and malonyl-CoA in the presence of NADPH. This multifunctional protein contains 7 catalytic activities and a site for the binding of the prosthetic group 4'-phosphopantetheine of the acyl carrier protein ([ACP]) domain. The chain is Fatty acid synthase (Fasn) from Rattus norvegicus (Rat).